Reading from the N-terminus, the 182-residue chain is ATP synthase subunit delta 2 (182 aa).

This sequence belongs to the ATPase delta chain family. F-type ATPases have 2 components, F(1) - the catalytic core - and F(0) - the membrane proton channel. F(1) has five subunits: alpha(3), beta(3), gamma(1), delta(1), epsilon(1). F(0) has three main subunits: a(1), b(2) and c(10-14). The alpha and beta chains form an alternating ring which encloses part of the gamma chain. F(1) is attached to F(0) by a central stalk formed by the gamma and epsilon chains, while a peripheral stalk is formed by the delta and b chains.

It localises to the cell inner membrane. In terms of biological role, f(1)F(0) ATP synthase produces ATP from ADP in the presence of a proton or sodium gradient. F-type ATPases consist of two structural domains, F(1) containing the extramembraneous catalytic core and F(0) containing the membrane proton channel, linked together by a central stalk and a peripheral stalk. During catalysis, ATP synthesis in the catalytic domain of F(1) is coupled via a rotary mechanism of the central stalk subunits to proton translocation. Its function is as follows. This protein is part of the stalk that links CF(0) to CF(1). It either transmits conformational changes from CF(0) to CF(1) or is implicated in proton conduction. The protein is ATP synthase subunit delta 2 of Photobacterium profundum (strain SS9).